Here is a 138-residue protein sequence, read N- to C-terminus: Transcription antitermination protein NusB (138 aa).

It belongs to the NusB family.

Functionally, involved in transcription antitermination. Required for transcription of ribosomal RNA (rRNA) genes. Binds specifically to the boxA antiterminator sequence of the ribosomal RNA (rrn) operons. The sequence is that of Transcription antitermination protein NusB from Helicobacter acinonychis (strain Sheeba).